Consider the following 307-residue polypeptide: Porphobilinogen deaminase (307 aa).

C241 carries the post-translational modification S-(dipyrrolylmethanemethyl)cysteine.

The protein belongs to the HMBS family. As to quaternary structure, monomer. Dipyrromethane serves as cofactor.

It catalyses the reaction 4 porphobilinogen + H2O = hydroxymethylbilane + 4 NH4(+). It functions in the pathway porphyrin-containing compound metabolism; protoporphyrin-IX biosynthesis; coproporphyrinogen-III from 5-aminolevulinate: step 2/4. Functionally, tetrapolymerization of the monopyrrole PBG into the hydroxymethylbilane pre-uroporphyrinogen in several discrete steps. The protein is Porphobilinogen deaminase of Coxiella burnetii (strain CbuG_Q212) (Coxiella burnetii (strain Q212)).